The chain runs to 338 residues: Transcription factor GRA2 (338 aa).

2 disordered regions span residues 171–230 (CQDS…PHYA) and 256–277 (TQHE…DGGS). The span at 174–203 (SGVSQPSNLADDTLGQGQPVSTVVQPQHPG) shows a compositional bias: polar residues. The interval 223 to 236 (KRQRPHYAIEKRYR) is basic motif. Positions 223–303 (KRQRPHYAIE…NQATLCIRQL (81 aa)) constitute a bHLH domain. Positions 237 to 303 (AGLQERFEAL…NQATLCIRQL (67 aa)) are helix-loop-helix motif.

The protein localises to the nucleus. Its function is as follows. Transcription factor that specifically regulates the expression of the gene cluster that mediates the biosynthesis of gramillins A and B, bicyclic lipopeptides that induce cell death in maize leaves but not in wheat leaves. This Gibberella zeae (strain ATCC MYA-4620 / CBS 123657 / FGSC 9075 / NRRL 31084 / PH-1) (Wheat head blight fungus) protein is Transcription factor GRA2 (GRA2).